The primary structure comprises 171 residues: Large ribosomal subunit protein uL10 (171 aa).

It belongs to the universal ribosomal protein uL10 family. Part of the ribosomal stalk of the 50S ribosomal subunit. The N-terminus interacts with L11 and the large rRNA to form the base of the stalk. The C-terminus forms an elongated spine to which L12 dimers bind in a sequential fashion forming a multimeric L10(L12)X complex.

Functionally, forms part of the ribosomal stalk, playing a central role in the interaction of the ribosome with GTP-bound translation factors. The sequence is that of Large ribosomal subunit protein uL10 from Methylocella silvestris (strain DSM 15510 / CIP 108128 / LMG 27833 / NCIMB 13906 / BL2).